A 444-amino-acid polypeptide reads, in one-letter code: UDP-N-acetylmuramate--L-alanine ligase (444 aa).

110-116 (GAHGKTS) lines the ATP pocket.

Belongs to the MurCDEF family.

The protein resides in the cytoplasm. The enzyme catalyses UDP-N-acetyl-alpha-D-muramate + L-alanine + ATP = UDP-N-acetyl-alpha-D-muramoyl-L-alanine + ADP + phosphate + H(+). It functions in the pathway cell wall biogenesis; peptidoglycan biosynthesis. Its function is as follows. Cell wall formation. This is UDP-N-acetylmuramate--L-alanine ligase from Streptococcus pneumoniae (strain Hungary19A-6).